The primary structure comprises 209 residues: Small ribosomal subunit protein uS4 (209 aa).

The 67-residue stretch at 98 to 164 (RRLDNVVYRL…LPVKNAIELN (67 aa)) folds into the S4 RNA-binding domain.

Belongs to the universal ribosomal protein uS4 family. As to quaternary structure, part of the 30S ribosomal subunit. Contacts protein S5. The interaction surface between S4 and S5 is involved in control of translational fidelity.

One of the primary rRNA binding proteins, it binds directly to 16S rRNA where it nucleates assembly of the body of the 30S subunit. Functionally, with S5 and S12 plays an important role in translational accuracy. This Thermosipho africanus (strain TCF52B) protein is Small ribosomal subunit protein uS4.